Reading from the N-terminus, the 90-residue chain is MAVLGKPKGHNRYRDPRTFEMTPALLRVRAPFFARNMIGLALATSIPLGVYLYTVDMLSKDEFSDIPIPPIADDELAKLKKEYEDKKNSS.

Residues 1 to 31 are Mitochondrial matrix-facing; the sequence is MAVLGKPKGHNRYRDPRTFEMTPALLRVRAP. Residues 32–54 traverse the membrane as a helical segment; the sequence is FFARNMIGLALATSIPLGVYLYT. At 55 to 90 the chain is on the mitochondrial intermembrane side; it reads VDMLSKDEFSDIPIPPIADDELAKLKKEYEDKKNSS.

Belongs to the COA3 family. Component of 250-400 kDa complexes called cytochrome oxidase assembly intermediates or COA complexes.

The protein localises to the mitochondrion inner membrane. Its function is as follows. Required for assembly of cytochrome c oxidase (complex IV). This Debaryomyces hansenii (strain ATCC 36239 / CBS 767 / BCRC 21394 / JCM 1990 / NBRC 0083 / IGC 2968) (Yeast) protein is Cytochrome c oxidase assembly factor 3, mitochondrial (COA3).